Here is a 1399-residue protein sequence, read N- to C-terminus: DNA-directed RNA polymerase subunit beta' (1399 aa).

Positions 71, 73, 86, and 89 each coordinate Zn(2+). Mg(2+) is bound by residues aspartate 462, aspartate 464, and aspartate 466. The Zn(2+) site is built by cysteine 810, cysteine 884, cysteine 891, and cysteine 894.

This sequence belongs to the RNA polymerase beta' chain family. As to quaternary structure, the RNAP catalytic core consists of 2 alpha, 1 beta, 1 beta' and 1 omega subunit. When a sigma factor is associated with the core the holoenzyme is formed, which can initiate transcription. Mg(2+) serves as cofactor. It depends on Zn(2+) as a cofactor.

It catalyses the reaction RNA(n) + a ribonucleoside 5'-triphosphate = RNA(n+1) + diphosphate. In terms of biological role, DNA-dependent RNA polymerase catalyzes the transcription of DNA into RNA using the four ribonucleoside triphosphates as substrates. The protein is DNA-directed RNA polymerase subunit beta' of Chelativorans sp. (strain BNC1).